A 242-amino-acid polypeptide reads, in one-letter code: Segregation and condensation protein A (242 aa).

The protein belongs to the ScpA family. Component of a cohesin-like complex composed of ScpA, ScpB and the Smc homodimer, in which ScpA and ScpB bind to the head domain of Smc. The presence of the three proteins is required for the association of the complex with DNA.

It is found in the cytoplasm. Participates in chromosomal partition during cell division. May act via the formation of a condensin-like complex containing Smc and ScpB that pull DNA away from mid-cell into both cell halves. The protein is Segregation and condensation protein A of Streptococcus pneumoniae serotype 4 (strain ATCC BAA-334 / TIGR4).